Reading from the N-terminus, the 1377-residue chain is DNA-directed RNA polymerase subunit beta' (1377 aa).

Positions 60, 62, 75, and 78 each coordinate Zn(2+). Asp-449, Asp-451, and Asp-453 together coordinate Mg(2+). Positions 777, 851, 858, and 861 each coordinate Zn(2+).

It belongs to the RNA polymerase beta' chain family. In terms of assembly, the RNAP catalytic core consists of 2 alpha, 1 beta, 1 beta' and 1 omega subunit. When a sigma factor is associated with the core the holoenzyme is formed, which can initiate transcription. Requires Mg(2+) as cofactor. The cofactor is Zn(2+).

The enzyme catalyses RNA(n) + a ribonucleoside 5'-triphosphate = RNA(n+1) + diphosphate. Its function is as follows. DNA-dependent RNA polymerase catalyzes the transcription of DNA into RNA using the four ribonucleoside triphosphates as substrates. The chain is DNA-directed RNA polymerase subunit beta' from Borrelia recurrentis (strain A1).